A 304-amino-acid polypeptide reads, in one-letter code: MGRRKKGRAVSGWIVIDKPAGLSSNAVVGKVRWAFDAQKAGHAGTLDPEATGVLAIALGEATKTVPFVTDALKAYEFTVRLGQATNTDDGEGEVTETSDARPSDDEIRAALPPFEGDILQVPPQFSAVKIDGERAYARARAGQEMEIAARPLYVDSLTFIARPDPDHVTLEMVCGKGGYVRSIARDLGRALGCFGHVKSLRRTWSGPFELSDATPLETLEDLAKDPALDAHLMPLETGLADLPELPCTPEGAARMRNGNPGMVRASDAEYGETAWASYNGTAVAVGTYRAGELHPTRVFQHGAL.

Aspartate 47 serves as the catalytic Nucleophile. Residues 85–105 (TNTDDGEGEVTETSDARPSDD) are disordered.

It belongs to the pseudouridine synthase TruB family. Type 1 subfamily.

The enzyme catalyses uridine(55) in tRNA = pseudouridine(55) in tRNA. Its function is as follows. Responsible for synthesis of pseudouridine from uracil-55 in the psi GC loop of transfer RNAs. The chain is tRNA pseudouridine synthase B from Dinoroseobacter shibae (strain DSM 16493 / NCIMB 14021 / DFL 12).